The following is a 197-amino-acid chain: Peptidyl-tRNA hydrolase (197 aa).

Y21 contacts tRNA. H26 acts as the Proton acceptor in catalysis. 3 residues coordinate tRNA: Y72, N74, and N120.

The protein belongs to the PTH family. In terms of assembly, monomer.

It is found in the cytoplasm. It catalyses the reaction an N-acyl-L-alpha-aminoacyl-tRNA + H2O = an N-acyl-L-amino acid + a tRNA + H(+). Hydrolyzes ribosome-free peptidyl-tRNAs (with 1 or more amino acids incorporated), which drop off the ribosome during protein synthesis, or as a result of ribosome stalling. Its function is as follows. Catalyzes the release of premature peptidyl moieties from peptidyl-tRNA molecules trapped in stalled 50S ribosomal subunits, and thus maintains levels of free tRNAs and 50S ribosomes. This is Peptidyl-tRNA hydrolase from Alkalilimnicola ehrlichii (strain ATCC BAA-1101 / DSM 17681 / MLHE-1).